We begin with the raw amino-acid sequence, 448 residues long: ATP synthase subunit b-delta (448 aa).

The segment at 1-168 (MSTFIGQLIG…GSVGAAKRPV (168 aa)) is ATP synthase subunit b. The chain crosses the membrane as a helical span at residues 4–24 (FIGQLIGFAVIVFLVVKYVVP). The ATP synthase subunit delta stretch occupies residues 169-448 (PGGYSGMHAA…LSAAALHLPN (280 aa)).

The protein in the N-terminal section; belongs to the ATPase B chain family. It in the C-terminal section; belongs to the ATPase delta chain family. As to quaternary structure, F-type ATPases have 2 components, F(1) - the catalytic core - and F(0) - the membrane proton channel. F(1) has five subunits: alpha(3), beta(3), gamma(1), delta(1), epsilon(1). F(0) has three main subunits: a(1), b(2) and c(10-14). The alpha and beta chains form an alternating ring which encloses part of the gamma chain. F(1) is attached to F(0) by a central stalk formed by the gamma and epsilon chains, while a peripheral stalk is formed by the delta and b chains.

It localises to the cell membrane. F(1)F(0) ATP synthase produces ATP from ADP in the presence of a proton or sodium gradient. F-type ATPases consist of two structural domains, F(1) containing the extramembraneous catalytic core and F(0) containing the membrane proton channel, linked together by a central stalk and a peripheral stalk. During catalysis, ATP synthesis in the catalytic domain of F(1) is coupled via a rotary mechanism of the central stalk subunits to proton translocation. Functionally, this fusion protein includes a component of the F(0) channel (subunit b) and of the F(1) subunit (subunit delta). Two copies of subunit b and one of delta together form the peripheral 'stator' stalk which links F(1) to F(0). The protein is ATP synthase subunit b-delta (atpFH) of Mycobacteroides abscessus (strain ATCC 19977 / DSM 44196 / CCUG 20993 / CIP 104536 / JCM 13569 / NCTC 13031 / TMC 1543 / L948) (Mycobacterium abscessus).